The chain runs to 956 residues: MGTGAADRSRGARWWLPWLGLCFWAAGAEAARGADSGEVLPDSIPSAPGTLPHFIEEPEDAYIIKSNPIALRCKARPAMQIFFKCNGEWVHQNEHVSEESLDESSGLKVREVFINVTRQQVEDFHGPEDYWCQCVAWSHLGTSKSRKASVRIAYLRKNFEQDPQGREVPIEGMIVLHCRPPEGVPAAEVEWLKNEEPIDSEQDENIDTRADHNLIIRQARLSDSGNYTCMAANIVAKRRSLSATVVVYVNGGWSSWTEWSACNVRCGRGWQKRSRTCTNPAPLNGGAFCEGMSVQKITCTALCPVDGSWEVWSEWSVCSPECEHLRIRECTAPPPRNGGKFCEGLSQESENCTDGLCILDKKPLHEIKPQRWSRRGIENASDIALYSGLGAAVVAVAVLVIGVTLYRRSHSDYGVDVIDSSALTGGFQTFNFKTVRQGNSLLLNPAMHPDLTVSRTYSGPICLQDPLDKELMTESSLFNPLSDIKVKVQSSFMVSLGVSERAEYHGKNHSGTFPHGNNRGFSTIHPRNKTPYIQNLSSLPTRTELRTTGVFGHLGGRLVMPNTGVSLLIPHGAIPEENSWEIYMSINQGEPSLQSDGSEVLLSPEVTCGPPDMLVTTPFALTIPHCADVSSEHWNIHLKKRTQQGKWEEVMSVEDESTSCYCLLDPFACHVLLDSFGTYALTGEPITDCAVKQLKVAVFGCMSCNSLDYNLRVYCVDNTPCAFQEVVSDERHQGGQLLEEPKLLHFKGNTFSLQISVLDIPPFLWRIKPFTACQEVPFSRVWSSNRQPLHCAFSLERYTPTTTQLSCKICIRQLKGHEQILQVQTSILESERETITFFAQEDSTFPAQTGPKAFKIPYSIRQRICATFDTPNAKGKDWQMLAQKNSINRNLSYFATQSSPSAVILNLWEARHQQDGDLDSLACALEEIGRTHTKLSNITEPQLDDTDFNYSRQNGL.

Positions 1-30 (MGTGAADRSRGARWWLPWLGLCFWAAGAEA) are cleaved as a signal peptide. The Extracellular segment spans residues 31 to 382 (ARGADSGEVL…SRRGIENASD (352 aa)). In terms of domain architecture, Ig-like spans 52-149 (PHFIEEPEDA…LGTSKSRKAS (98 aa)). Cystine bridges form between cysteine 73-cysteine 134, cysteine 85-cysteine 132, cysteine 178-cysteine 229, cysteine 262-cysteine 299, cysteine 266-cysteine 303, cysteine 277-cysteine 289, cysteine 318-cysteine 352, cysteine 322-cysteine 357, and cysteine 330-cysteine 342. The interval 89–91 (WVH) is important for interaction with FLRT2. Asparagine 115 and asparagine 226 each carry an N-linked (GlcNAc...) asparagine glycan. An Ig-like C2-type domain is found at 164-242 (QGREVPIEGM…NIVAKRRSLS (79 aa)). 2 TSP type-1 domains span residues 250 to 304 (NGGW…ALCP) and 306 to 358 (DGSW…GLCI). The helical transmembrane segment at 383 to 403 (IALYSGLGAAVVAVAVLVIGV) threads the bilayer. Residues 404–956 (TLYRRSHSDY…DFNYSRQNGL (553 aa)) lie on the Cytoplasmic side of the membrane. A ZU5 domain is found at 545-685 (LRTTGVFGHL…FGTYALTGEP (141 aa)). The region spanning 862–939 (QRICATFDTP…RTHTKLSNIT (78 aa)) is the Death domain.

Belongs to the unc-5 family. As to quaternary structure, interacts (via extracellular domain) with FLRT2 and FLRT3 (via extracellular domain); the interaction is direct. Has higher affinity for FLRT2. Identified in a complex with FLRT3 and ADGRL3; does not interact with ADGRL3 by itself. Post-translationally, proteolytically cleaved by caspases during apoptosis. The cleavage does not take place when the receptor is associated with netrin ligand. Its cleavage by caspases is required to induce apoptosis.

It is found in the cell membrane. Receptor for the netrin NTN4 that promotes neuronal cell survival. Plays a role in cell-cell adhesion and cell guidance. Receptor for netrin involved in cell migration. Plays a role in axon guidance by mediating axon repulsion of neuronal growth cones in the developing nervous system upon ligand binding. May play a role in apoptosis in response to DNA damage. It also acts as a dependence receptor required for apoptosis induction when not associated with netrin ligand. Mediates cell-cell adhesion via its interaction with FLRT3 on an adjacent cell. This is Netrin receptor UNC5D from Rattus norvegicus (Rat).